The following is a 570-amino-acid chain: Interleukin-1 receptor accessory protein (570 aa).

The signal sequence occupies residues 1–20 (MTLLWCVVSLYFYGILQSDA). 3 consecutive Ig-like C2-type domains span residues 21-128 (SERC…VAFP), 136-226 (SCFN…FHLT), and 242-350 (PPVI…VKQK). At 21–367 (SERCDDWGLD…VELACGFGAT (347 aa)) the chain is on the extracellular side. Disulfide bonds link Cys24-Cys122, Cys47-Cys114, Cys137-Cys181, Cys160-Cys212, and Cys266-Cys332. The N-linked (GlcNAc...) asparagine glycan is linked to Asn57. Residues 69–85 (IWYWTRQDRDLEEPINF) form an essential for interaction with PTPRD region. 3 N-linked (GlcNAc...) asparagine glycosylation sites follow: Asn107, Asn111, and Asn118. N-linked (GlcNAc...) asparagine glycans are attached at residues Asn196, Asn209, and Asn299. The helical transmembrane segment at 368–388 (VLLVVILIVVYHVYWLEMVLF) threads the bilayer. The Cytoplasmic segment spans residues 389 to 570 (YRAHFGTDET…GLSYSSLKNV (182 aa)). Positions 403-546 (KEYDIYVSYA…RFWKQLQVAM (144 aa)) constitute a TIR domain. Residue Glu482 is part of the active site. The disordered stretch occupies residues 549–570 (KKSPRRSSSDEQGLSYSSLKNV). A Phosphoserine modification is found at Ser557. Polar residues predominate over residues 558–570 (DEQGLSYSSLKNV).

The protein belongs to the interleukin-1 receptor family. The interleukin-36 receptor complex is a heterodimer of IL1RL2 and IL1RAP; the association is inhibited by IL36RN. The interleukin-1 receptor complex is a heterodimer of IL1R1 and IL1RAP. Associates with IL1R2 to form a non-signaling interleukin-1 receptor complex. Interacts with IL-33-bound IL1RL1 to form the minimal interleukin-33 signaling complex with a 1:1:1 stoichiometry. Interacts with KIT (independently of stimulation with KITLG/SCF). A mast cell-specific KITLG/SCF-induced interleukin-33 signaling complex contains IL1RL1, IL1RAP, KIT and MYD88. Interacts (via the first immunoglobilin domain) with PTPRD (via the third immunoglobilin domain); induces pre- and postsynaptic differentiation of neurons.

The protein localises to the cell membrane. It is found in the secreted. The catalysed reaction is NAD(+) + H2O = ADP-D-ribose + nicotinamide + H(+). Functionally, coreceptor for IL1RL2 in the IL-36 signaling system. Coreceptor with IL1R1 in the IL-1 signaling system. Associates with IL1R1 bound to IL1B to form the high affinity interleukin-1 receptor complex which mediates interleukin-1-dependent activation of NF-kappa-B and other pathways. Signaling involves the recruitment of adapter molecules such as TOLLIP, MYD88, and IRAK1 or IRAK2 via the respective TIR domains of the receptor/coreceptor subunits. Recruits TOLLIP to the signaling complex. Does not bind to interleukin-1 alone; binding of IL1RN to IL1R1, prevents its association with IL1R1 to form a signaling complex. The cellular response is modulated through a non-signaling association with the membrane IL1R2 decoy receptor. Coreceptor for IL1RL1 in the IL-33 signaling system. Can bidirectionally induce pre- and postsynaptic differentiation of neurons by trans-synaptically binding to PTPRD. May play a role in IL1B-mediated costimulation of IFNG production from T-helper 1 (Th1) cells. In terms of biological role, associates with secreted ligand-bound IL1R2 and increases the affinity of secreted IL1R2 for IL1B; this complex formation may be the dominant mechanism for neutralization of IL1B by secreted/soluble receptors. Enhances the ability of secreted IL1R1 to inhibit IL-33 signaling. In Macaca mulatta (Rhesus macaque), this protein is Interleukin-1 receptor accessory protein (IL1RAP).